The sequence spans 68 residues: Protein SlyX homolog (68 aa).

Belongs to the SlyX family.

This chain is Protein SlyX homolog, found in Brucella anthropi (strain ATCC 49188 / DSM 6882 / CCUG 24695 / JCM 21032 / LMG 3331 / NBRC 15819 / NCTC 12168 / Alc 37) (Ochrobactrum anthropi).